The sequence spans 417 residues: MFRRLLIATLIGILAALAVAAFRHAMQLLEWIFLSNDTGSLVNAAEGLSPWRRLITPALGGLAAGLLLWGWQKMNQQRPHAPTDYMEALQTDGQFDVGASLVKSLASLLVVVSGSAIGREGAMILLAALAASSFARRFTPREEWKLWIASGAAAGMAGAYHAPLAGSLFIAEILFGTLMLASLGPVVVSAVVALLTTHLLNGSDSLLYTVHLTVDLHAREYVMIVSTGLVAGLCGPLLMWLMTASHNSFLRLKLSPPWQLALGGLIVGLLSLLTPTVWGNGYSVVQSFLLSPPLFSLIGGIFACKILAVLASSGSGAPGGVFTPTLFVGLSIGMFLGRIWGFWLPGSDEIAILLGLAGMATLLAATTHAPIMSTLMICEMTGEYQLLPGLLIACVVASVLSRTLRHDSIYRQHAAEH.

10 helical membrane-spanning segments follow: residues 5–25 (LLIA…FRHA), 54–74 (LITP…WQKM), 146–166 (LWIA…PLAG), 168–188 (LFIA…PVVV), 222–242 (VMIV…MWLM), 258–278 (WQLA…PTVW), 288–308 (FLLS…KILA), 316–336 (GAPG…GMFL), 349–371 (EIAI…HAPI), and 380–400 (MTGE…ASVL).

This sequence belongs to the chloride channel (TC 2.A.49) family. ClcB subfamily.

It localises to the cell inner membrane. Functionally, probably acts as an electrical shunt for an outwardly-directed proton pump that is linked to amino acid decarboxylation, as part of the extreme acid resistance (XAR) response. The sequence is that of Voltage-gated ClC-type chloride channel ClcB from Salmonella dublin (strain CT_02021853).